The primary structure comprises 226 residues: UPF0758 protein GK2618 (226 aa).

Residues 104 to 226 (VIRCPEDGAK…FISLKEKGYV (123 aa)) enclose the MPN domain. Residues histidine 175, histidine 177, and aspartate 188 each contribute to the Zn(2+) site. Positions 175-188 (HNHPSGDPTPSRED) match the JAMM motif motif.

It belongs to the UPF0758 family.

The chain is UPF0758 protein GK2618 from Geobacillus kaustophilus (strain HTA426).